We begin with the raw amino-acid sequence, 60 residues long: MNKLLKLFFITIIIYNNIAFAKETGFYMGAAIGIVEPVVRKFRHKYSNTGIIFQICIAGK.

Residues 1–21 (MNKLLKLFFITIIIYNNIAFA) form the signal peptide.

This is an uncharacterized protein from Rickettsia prowazekii (strain Madrid E).